A 280-amino-acid chain; its full sequence is Large ribosomal subunit protein uL2 (280 aa).

Disordered regions lie at residues 33–55 (LTEG…RRRG) and 224–266 (AMNP…KASQ). Over residues 256-266 (TRTRNKNKASQ) the composition is skewed to basic residues.

It belongs to the universal ribosomal protein uL2 family. Part of the 50S ribosomal subunit. Forms a bridge to the 30S subunit in the 70S ribosome.

Its function is as follows. One of the primary rRNA binding proteins. Required for association of the 30S and 50S subunits to form the 70S ribosome, for tRNA binding and peptide bond formation. It has been suggested to have peptidyltransferase activity; this is somewhat controversial. Makes several contacts with the 16S rRNA in the 70S ribosome. The protein is Large ribosomal subunit protein uL2 of Ruegeria pomeroyi (strain ATCC 700808 / DSM 15171 / DSS-3) (Silicibacter pomeroyi).